We begin with the raw amino-acid sequence, 176 residues long: Ribosome maturation factor RimM (176 aa).

The PRC barrel domain occupies 93–166 (EGEYYHADLI…RVVIELPAEI (74 aa)).

The protein belongs to the RimM family. Binds ribosomal protein uS19.

It localises to the cytoplasm. Its function is as follows. An accessory protein needed during the final step in the assembly of 30S ribosomal subunit, possibly for assembly of the head region. Essential for efficient processing of 16S rRNA. May be needed both before and after RbfA during the maturation of 16S rRNA. It has affinity for free ribosomal 30S subunits but not for 70S ribosomes. The protein is Ribosome maturation factor RimM of Rhodopseudomonas palustris (strain BisB18).